The sequence spans 183 residues: Ras-related protein Rap-2a (183 aa).

10 to 17 (GSGGVGKS) serves as a coordination point for GTP. Positions 32–40 (YDPTIEDFY) match the Effector region motif. GTP-binding positions include 57–61 (DTAGT) and 116–119 (NKVD). Residues Cys176 and Cys177 are each lipidated (S-palmitoyl cysteine). At Cys180 the chain carries Cysteine methyl ester. Residue Cys180 is the site of S-farnesyl cysteine attachment. The propeptide at 181–183 (NIQ) is removed in mature form.

This sequence belongs to the small GTPase superfamily. Ras family. Interacts with PLCE1. Interacts with ARHGAP29, SGSM1, SGSM2 and SGSM3. Interacts (GTP-bound form preferentially) with MAP4K4. Interacts with MINK1. Interacts with cytoskeletal actin. Interacts (GTP-bound form) with RUNDC3A. Interacts (GTP-bound form preferentially) with TNIK (via the CNH domain); the interaction is direct and recruits RAP2A to the E3 ubiquitin ligase NEDD4. Interacts with RGS14; the interaction is GTP-dependent. Ubiquitinated; undergoes 'Lys-63' monoubiquitination and diubiquitination by NEDD4. Multiple lysine residues are probably modified. Ubiquitination requires TNIK, prevents interaction with effectors and inactivates RAP2A. Ubiquitination by the ECS(RAB40B) complex leads to RAP2A localization to lamellipodia plasma membrane, activation, and regulation of sorting at early endosomes for recycling to the lamellipodia plasma membrane. In terms of processing, palmitoylated. Palmitoylation is required for association with recycling endosome membranes and activation of TNIK. Expressed in granular layer of the cerebellum, forebrain, striatum, layer V of the cortex, olfactory cortex, tubercules, subthalamic and hippocampus, particularly in the CA2 region, to a lesser extent in the CA1 region and the external layer of the dentate gyrus. Expressed in neurons.

Its subcellular location is the midbody. It is found in the cell projection. The protein resides in the lamellipodium membrane. It localises to the golgi apparatus. The protein localises to the recycling endosome membrane. Its subcellular location is the lysosome. It catalyses the reaction GTP + H2O = GDP + phosphate + H(+). With respect to regulation, activated by the guanine nucleotide-exchange factors RAPGEF3 and RAPGEF4 in a cAMP-dependent manner. Nucleotide exchange is also specifically stimulated by RAPGEF5, RASGEF1A and RASGEF1B. Functionally, small GTP-binding protein which cycles between a GDP-bound inactive and a GTP-bound active form. In its active form interacts with and regulates several effectors including MAP4K4, MINK1 and TNIK. Part of a signaling complex composed of NEDD4, RAP2A and TNIK which regulates neuronal dendrite extension and arborization during development. More generally, it is part of several signaling cascades and may regulate cytoskeletal rearrangements, cell migration, cell adhesion and cell spreading. This is Ras-related protein Rap-2a from Mus musculus (Mouse).